The chain runs to 74 residues: Large ribosomal subunit protein bL27c (74 aa).

This sequence belongs to the bacterial ribosomal protein bL27 family.

Its subcellular location is the plastid. It localises to the chloroplast. The polypeptide is Large ribosomal subunit protein bL27c (rpl27) (Calyptrosphaera sphaeroidea).